Consider the following 359-residue polypeptide: Peptide chain release factor 1 (359 aa).

N5-methylglutamine is present on Gln238.

It belongs to the prokaryotic/mitochondrial release factor family. Post-translationally, methylated by PrmC. Methylation increases the termination efficiency of RF1.

The protein resides in the cytoplasm. In terms of biological role, peptide chain release factor 1 directs the termination of translation in response to the peptide chain termination codons UAG and UAA. This is Peptide chain release factor 1 from Rhodococcus jostii (strain RHA1).